The sequence spans 184 residues: Major fimbrial subunit (184 aa).

The N-terminal stretch at 1-22 is a signal peptide; that stretch reads MKLSKIALAAALVFGINSVATA. A disulfide bridge links Cys49 with Cys88.

Belongs to the fimbrial protein family.

The protein resides in the fimbrium. In terms of biological role, major structural component of PMF fimbriae. The polypeptide is Major fimbrial subunit (pmfA) (Proteus mirabilis (strain HI4320)).